Reading from the N-terminus, the 910-residue chain is Staphylococcal nuclease domain-containing protein 1 (910 aa).

Ala-2 is modified (N-acetylalanine). TNase-like domains lie at 18–166 (TVQR…MWSE), 193–328 (KPVN…IWRD), and 341–496 (KQFV…LHSK). Thr-103 is subject to Phosphothreonine. Lys-193 bears the N6-acetyllysine mark. At Thr-240 the chain carries Phosphothreonine. Short sequence motifs (nuclear localization signal) lie at residues 321–325 (RRLRI) and 388–392 (KKLRP). Phosphoserine is present on Ser-426. Residue Lys-513 forms a Glycyl lysine isopeptide (Lys-Gly) (interchain with G-Cter in SUMO2) linkage. The TNase-like 4 domain maps to 525–660 (GRSEAVVEYV…KQKKEKVWAH (136 aa)). Position 641 is an N6-acetyllysine (Lys-641). Phosphoserine is present on Ser-645. Residues 729 to 787 (APRRGEFCIAKFVDGEWYRARVEKVESPAKVHVFYIDYGNREILPSTRLGTLPPAFSTR) enclose the Tudor domain. Thr-779 bears the Phosphothreonine mark. 2 positions are modified to phosphoserine: Ser-785 and Ser-909.

In terms of assembly, forms a ternary complex with STAT6 and POLR2A. Associates with the RNA-induced silencing complex (RISC). Interacts with the RISC components AGO2, FMR1 and TNRC6A. Interacts with GTF2E1 and GTF2E2. Interacts with PIM1. Interacts with STAT5. Interacts with SYT11 (via C2 2 domain); the interaction with SYT11 is direct. In terms of processing, phosphorylated by PIM1 in vitro. In terms of tissue distribution, in lactating cows highly expressed in mammary epithelial cells.

The protein resides in the cytoplasm. Its subcellular location is the nucleus. It localises to the melanosome. It carries out the reaction Endonucleolytic cleavage to nucleoside 3'-phosphates and 3'-phosphooligonucleotide end-products.. Endonuclease that mediates miRNA decay of both protein-free and AGO2-loaded miRNAs. As part of its function in miRNA decay, regulates mRNAs involved in G1-to-S phase transition. Functions as a bridging factor between STAT6 and the basal transcription factor. Plays a role in PIM1 regulation of MYB activity. Functions as a transcriptional coactivator for STAT5. This chain is Staphylococcal nuclease domain-containing protein 1 (SND1), found in Bos taurus (Bovine).